We begin with the raw amino-acid sequence, 349 residues long: Insulin gene enhancer protein ISL-1 (349 aa).

LIM zinc-binding domains are found at residues 17-70 (CVGC…CKRD) and 79-133 (CAKC…RADH). Positions 181 to 240 (TTRVRTVLNEKQLHTLRTCYAANPRPDALMKEQLVEMTGLSPRVIRVWFQNKRCKDKKRS) form a DNA-binding region, homeobox. Residues 312-349 (VNFSEGGPGSNSTGSEVASMSSQLPDTPNSMVASPIEA) form a disordered region. Residues 321 to 343 (SNSTGSEVASMSSQLPDTPNSMV) are compositionally biased toward polar residues.

The protein localises to the nucleus. Its function is as follows. Acts as a transcriptional regulator. Recognizes and binds to the consensus octamer binding site 5'-ATAATTAA-3' in promoter of target genes. Plays a fundamental role in the gene regulatory network essential for retinal ganglion cell (RGC) differentiation. Binds to insulin gene enhancer sequences. Defines subclasses of motoneurons that segregate into columns in the spinal cord and select distinct axon pathways. Acts in conjunction with LHX1, LHX3 and ISL2. Binds to insulin gene enhancer sequences. Essential for heart development. The polypeptide is Insulin gene enhancer protein ISL-1 (ISL1) (Gallus gallus (Chicken)).